An 852-amino-acid chain; its full sequence is DNA mismatch repair protein MutS (852 aa).

602 to 609 (GPNMSGKS) is an ATP binding site.

The protein belongs to the DNA mismatch repair MutS family.

Its function is as follows. This protein is involved in the repair of mismatches in DNA. It is possible that it carries out the mismatch recognition step. This protein has a weak ATPase activity. This Streptococcus thermophilus (strain CNRZ 1066) protein is DNA mismatch repair protein MutS.